The following is a 227-amino-acid chain: Uracil-DNA glycosylase (227 aa).

D64 functions as the Proton acceptor in the catalytic mechanism.

This sequence belongs to the uracil-DNA glycosylase (UDG) superfamily. UNG family.

It is found in the cytoplasm. The enzyme catalyses Hydrolyzes single-stranded DNA or mismatched double-stranded DNA and polynucleotides, releasing free uracil.. Excises uracil residues from the DNA which can arise as a result of misincorporation of dUMP residues by DNA polymerase or due to deamination of cytosine. The polypeptide is Uracil-DNA glycosylase (Erwinia tasmaniensis (strain DSM 17950 / CFBP 7177 / CIP 109463 / NCPPB 4357 / Et1/99)).